The chain runs to 667 residues: Leucine aminopeptidase 2 (667 aa).

Residues 188-190 (QCQ) and 318-323 (PYGGME) contribute to the a peptide site. H347 contacts Zn(2+). Catalysis depends on E348, which acts as the Proton acceptor. Zn(2+) is bound by residues H351 and E370. Y436 (proton donor) is an active-site residue.

The protein belongs to the peptidase M1 family. Zn(2+) is required as a cofactor.

Its subcellular location is the cytoplasm. It localises to the nucleus. The enzyme catalyses an epoxide + H2O = an ethanediol. Aminopeptidase that preferentially cleaves di- and tripeptides. Also has low epoxide hydrolase activity (in vitro). Can hydrolyze the epoxide leukotriene LTA(4) but it forms preferentially 5,6-dihydroxy-7,9,11,14-eicosatetraenoic acid rather than the cytokine leukotriene B(4) as the product compared to the homologous mammalian enzyme (in vitro). The sequence is that of Leucine aminopeptidase 2 (ara-1) from Neurospora crassa (strain ATCC 24698 / 74-OR23-1A / CBS 708.71 / DSM 1257 / FGSC 987).